Consider the following 2515-residue polypeptide: Protein tudor (2515 aa).

Phosphoserine is present on residues Ser-226, Ser-235, and Ser-239. Tudor domains follow at residues 455-513 and 641-696; these read APEL…LLEI and QLIL…HLEM. Position 800 is a phosphoserine (Ser-800). Residues 840-996 form a disordered region; sequence QAVKSVSGSK…SSSESVAAAK (157 aa). Low complexity predominate over residues 890 to 900; it reads STGSYSSGMSS. Residues 906–917 show a composition bias toward polar residues; it reads RQQNGRTPIQSP. Residues 918-927 are compositionally biased toward basic and acidic residues; that stretch reads RHNEKQEAKK. 2 stretches are compositionally biased toward polar residues: residues 943 to 954 and 964 to 976; these read GQQGNQRSQNAP and QKSTLDGNISSKR. Positions 977–995 are enriched in low complexity; that stretch reads SSGVGSDIASSSSESVAAA. Tudor domains are found at residues 1062-1122 and 1355-1414; these read QLKV…FADP and KFDV…FYEH. The disordered stretch occupies residues 1515–1589; it reads EEDKGRKETV…KPATPVPEVV (75 aa). Over residues 1540–1553 the composition is skewed to basic and acidic residues; that stretch reads NDKDREPKKSKPAE. The span at 1569 to 1584 shows a compositional bias: pro residues; the sequence is SPVPAEPAPVPKPATP. Tudor domains lie at 1662–1718, 1839–1898, 2023–2082, 2211–2269, and 2392–2451; these read NVVN…SHIE, GFEK…SLPS, KAAV…LIKP, TTNS…PIPS, and DLKE…KPAR.

May form part of a piRNA processing complex consisting of tud, aub and AGO3. Interacts with AGO3 (when symmetrically dimethylated on Arg residues) and aub (when symmetrically dimethylated on Arg residues). Interacts with vls. Interacts with me31B/DDX6 (when symmetrically dimethylated on Arg residues).

It is found in the cytoplasm. It localises to the perinuclear region. The protein resides in the cytoplasmic ribonucleoprotein granule. Functionally, may act via the Piwi-interacting RNA (piRNA) metabolic process mediated by aub and AGO3 Piwi proteins, which mediates the repression of transposable elements during meiosis by forming complexes composed of piRNAs and Piwi proteins and governs the methylation and subsequent repression of transposons. Required during oogenesis for the formation of primordial germ cells and for normal abdominal segmentation. Not involved in repression of retroelements. The polypeptide is Protein tudor (Drosophila melanogaster (Fruit fly)).